Consider the following 656-residue polypeptide: Membrane-associated tyrosine- and threonine-specific cdc2-inhibitory kinase wee-1.3 (656 aa).

Polar residues predominate over residues 1–11 (MDETENNTSID). The tract at residues 1–24 (MDETENNTSIDSVEVGPSSPRVVA) is disordered. In terms of domain architecture, Protein kinase spans 107-354 (FQIDEIIGRG…SDALRKHLSI (248 aa)). ATP-binding positions include 113–121 (IGRGSFGEV) and K136. D227 functions as the Proton acceptor in the catalytic mechanism. Mg(2+) is bound by residues N232 and D245. Disordered stretches follow at residues 449 to 552 (PFDF…NSSI) and 617 to 656 (KGKEKPVVEPAELRQRPMRNGLKSLRSRMASFQGSSGDEN). Polar residues predominate over residues 486 to 505 (ATCSSSNSSAIETAEDSLSS). The span at 617–631 (KGKEKPVVEPAELRQ) shows a compositional bias: basic and acidic residues. Residues 646-656 (ASFQGSSGDEN) show a composition bias toward polar residues.

It belongs to the protein kinase superfamily. Ser/Thr protein kinase family. WEE1 subfamily.

The protein localises to the golgi apparatus membrane. Its subcellular location is the cytoplasm. It catalyses the reaction L-seryl-[protein] + ATP = O-phospho-L-seryl-[protein] + ADP + H(+). The catalysed reaction is L-threonyl-[protein] + ATP = O-phospho-L-threonyl-[protein] + ADP + H(+). Acts as a negative regulator of entry into mitosis (G2 to M transition) by phosphorylation of the CDK1 kinase during oocyte maturation. Required for embryonic development, germline proliferation and initiation of meiosis during spermatogenesis. Required for chromosome structure during mitosis and negative regulation of nuclear envelope breakdown. The chain is Membrane-associated tyrosine- and threonine-specific cdc2-inhibitory kinase wee-1.3 from Caenorhabditis briggsae.